A 533-amino-acid chain; its full sequence is Tyrosine-protein kinase transforming protein Fps (533 aa).

Residues 1-46 (ASGQLHRPQPQEHTSTSAAAGTWRHTQASESRHRLPHCSAAPSHQD) form a disordered region. The segment covering 11-29 (QEHTSTSAAAGTWRHTQAS) has biased composition (polar residues). An F-BAR; degenerate domain is found at 50-124 (MGFGPELWCP…LQEDRQSVCS (75 aa)). The 90-residue stretch at 171 to 260 (WYHGAIPRSE…KSGIVLTRAV (90 aa)) folds into the SH2 domain. In terms of domain architecture, Protein kinase spans 272–525 (VLLGERIGRG…PSFGAVHQDL (254 aa)). ATP-binding positions include 278-286 (IGRGNFGEV) and Lys-301. Catalysis depends on Asp-394, which acts as the Proton acceptor. Residue Tyr-424 is modified to Phosphotyrosine; by autocatalysis.

It belongs to the protein kinase superfamily. Tyr protein kinase family. Fes/fps subfamily.

It carries out the reaction L-tyrosyl-[protein] + ATP = O-phospho-L-tyrosyl-[protein] + ADP + H(+). The sequence is that of Tyrosine-protein kinase transforming protein Fps (V-FPS) from Gallus gallus (Chicken).